Consider the following 791-residue polypeptide: Putative inactive tyrosine-protein kinase Wsck (791 aa).

The signal sequence occupies residues 1–26 (MECGSHSGHRPIPIWLSSCLVAMCLG). Topologically, residues 27–401 (LPLGAAVPQE…YATFEKGQSS (375 aa)) are extracellular. Residues 39 to 125 (AYYYVGCYTA…VGVHSYYSTI (87 aa)) enclose the WSC domain. One can recognise a Fibronectin type-III domain in the interval 131-246 (GPHHLRISNK…ASIEATTEVG (116 aa)). 3 N-linked (GlcNAc...) asparagine glycosylation sites follow: N139, N217, and N329. A helical membrane pass occupies residues 402–422 (VVALAVTCVIFGSCLLLSLIA). The Cytoplasmic portion of the chain corresponds to 423–791 (YFYLRYKTCR…PQLEAVATMG (369 aa)). Residues 493–758 (LNVNDVIGDG…DVAFGVRQLM (266 aa)) form the Protein kinase domain. 499-507 (IGDGRFGEI) is a binding site for ATP.

This sequence belongs to the protein kinase superfamily. Tyr protein kinase family.

Its subcellular location is the membrane. In terms of biological role, probably lacks tyrosine-protein kinase activity. This Drosophila melanogaster (Fruit fly) protein is Putative inactive tyrosine-protein kinase Wsck.